The primary structure comprises 496 residues: Protein RepS (496 aa).

The DNA-binding element occupies 120–141 (SDILTTAIDLGFMPTLIIKSDK).

Its function is as follows. Essential for replication. This Streptococcus pyogenes protein is Protein RepS (repS).